A 185-amino-acid polypeptide reads, in one-letter code: MESTITIENVVASTRLAEDFDLEKMMESGLEGAEYNKVKFPGLVYRINNPKAAFLIFTSGKVVCTGSKSIGNAHAAIINLANTLKSICCEKIDLEPDVRVQNIVASADLKTNLNLNTIAIAFGLENVEYEPEVFPGLIYRVEAPKVVVLVFSSGKLVITGGKCPEDCEEGLRIVKTEFDNLGLLY.

Tandem repeats lie at residues 7–84 and 100–178.

Belongs to the TBP family.

In terms of biological role, general factor that plays a role in the activation of archaeal genes transcribed by RNA polymerase. Binds specifically to the TATA box promoter element which lies close to the position of transcription initiation. The sequence is that of TATA-box-binding protein 3 from Methanosarcina mazei (strain ATCC BAA-159 / DSM 3647 / Goe1 / Go1 / JCM 11833 / OCM 88) (Methanosarcina frisia).